A 396-amino-acid polypeptide reads, in one-letter code: Cell adhesion molecule 3 (396 aa).

Residues methionine 1–alanine 22 form the signal peptide. Positions asparagine 23–valine 124 constitute an Ig-like V-type domain. Topologically, residues asparagine 23–histidine 328 are extracellular. Intrachain disulfides connect cysteine 48-cysteine 108, cysteine 150-cysteine 207, and cysteine 252-cysteine 297. Ig-like C2-type domains lie at proline 128 to glutamate 226 and proline 231 to asparagine 313. Asparagine 288 carries N-linked (GlcNAc...) asparagine glycosylation. The chain crosses the membrane as a helical span at residues alanine 329–leucine 349. At glycine 350–isoleucine 396 the chain is on the cytoplasmic side. Residues alanine 365 to isoleucine 396 are disordered. The residue at position 386 (serine 386) is a Phosphoserine.

The protein belongs to the nectin family. Homodimer. Can form trans-heterodimers with NECTIN3. Interacts with EPB41L1, DLG3, PALS2 and CASK. Mainly expressed in brain, in neuronal cell bodies of cerebellum, cortex, hippocampus, hypothalamus and spinal cord. In spinal cord predominantly expressed in motor neurons. Expressed in axons, presynaptic nerve terminals, glia cell processes.

The protein resides in the cell membrane. It localises to the cell junction. Its function is as follows. Involved in cell-cell adhesion. Has both calcium-independent homophilic cell-cell adhesion activity and calcium-independent heterophilic cell-cell adhesion activity with IGSF4, NECTIN1 and NECTIN3. Interaction with EPB41L1 may regulate structure or function of cell-cell junctions. In Mus musculus (Mouse), this protein is Cell adhesion molecule 3 (Cadm3).